A 145-amino-acid chain; its full sequence is MSGSKSSSETEEGLAFQPSFDASGLVTCVATDAKTGDVLMVAHMNEEALRRTVETGDAWYYSRSRKALWRKGESSGQVQRVLEMRTDCDQDAVWIKVEQQGAACHTGRRSCFYRAVAKGEGAGIRLAFVDAERLFDPAEVYRAKA.

D87 is a Mg(2+) binding site. Residue C88 coordinates Zn(2+). D89 and D91 together coordinate Mg(2+). Zn(2+)-binding residues include C104 and C111.

This sequence belongs to the PRA-CH family. In terms of assembly, homodimer. It depends on Mg(2+) as a cofactor. The cofactor is Zn(2+).

Its subcellular location is the cytoplasm. The catalysed reaction is 1-(5-phospho-beta-D-ribosyl)-5'-AMP + H2O = 1-(5-phospho-beta-D-ribosyl)-5-[(5-phospho-beta-D-ribosylamino)methylideneamino]imidazole-4-carboxamide. It participates in amino-acid biosynthesis; L-histidine biosynthesis; L-histidine from 5-phospho-alpha-D-ribose 1-diphosphate: step 3/9. In terms of biological role, catalyzes the hydrolysis of the adenine ring of phosphoribosyl-AMP. This is Phosphoribosyl-AMP cyclohydrolase from Nitrobacter winogradskyi (strain ATCC 25391 / DSM 10237 / CIP 104748 / NCIMB 11846 / Nb-255).